The following is a 201-amino-acid chain: Probable calcium-binding protein CML15 (201 aa).

The segment at 1-55 (MGKVRAFFSRKGRGNSSGRSRSMREAAMNVDWSPRPSDLAAAAAAKPRPPAAEDE) is disordered. EF-hand domains lie at 51–86 (AAEDETERVFRKFDANGDGRISRAELAALFRSVGHA), 87–122 (VTDDEVARMMQEADSDGDGYISLGEFAAISAPPPGD), 125–160 (AAEEDLRHAFGVFDADGNGVITPAELARVLRGIGEA), and 161–196 (ATVAQCRRMIDGVDRNGDGLINFEEFKLMMAAGAGF). Ca(2+) is bound by residues D64, N66, D68, R70, E75, D100, D102, D104, Y106, E111, D138, D140, N142, E149, D174, N176, D178, and E185.

Functionally, potential calcium sensor. The sequence is that of Probable calcium-binding protein CML15 (CML15) from Oryza sativa subsp. japonica (Rice).